The sequence spans 649 residues: DNA mismatch repair protein MutL (649 aa).

This sequence belongs to the DNA mismatch repair MutL/HexB family.

Its function is as follows. This protein is involved in the repair of mismatches in DNA. It is required for dam-dependent methyl-directed DNA mismatch repair. May act as a 'molecular matchmaker', a protein that promotes the formation of a stable complex between two or more DNA-binding proteins in an ATP-dependent manner without itself being part of a final effector complex. In Streptococcus pneumoniae serotype 2 (strain D39 / NCTC 7466), this protein is DNA mismatch repair protein MutL.